The sequence spans 308 residues: uncharacterized protein (308 aa).

The interval 19-43 is disordered; the sequence is EPQASGAGPAQTPPPVTVPMTPPSK. Pro residues predominate over residues 29 to 43; sequence QTPPPVTVPMTPPSK.

This is an uncharacterized protein from Deinococcus radiodurans (strain ATCC 13939 / DSM 20539 / JCM 16871 / CCUG 27074 / LMG 4051 / NBRC 15346 / NCIMB 9279 / VKM B-1422 / R1).